Reading from the N-terminus, the 151-residue chain is Arginine repressor (151 aa).

The protein belongs to the ArgR family.

It is found in the cytoplasm. Its pathway is amino-acid biosynthesis; L-arginine biosynthesis [regulation]. In terms of biological role, regulates arginine biosynthesis genes. This chain is Arginine repressor, found in Enterococcus faecalis (strain ATCC 700802 / V583).